Consider the following 470-residue polypeptide: Transcription factor SOX-8 (470 aa).

The span at 1–12 (MLNMTEEHDKAL) shows a compositional bias: basic and acidic residues. Residues 1 to 60 (MLNMTEEHDKALEAPCSPAGTTSSMSHVDSDSDSPLSPAGSEGLGCAPAPAPRPPGAAPL) are disordered. Residues 67–107 (AEVDERFPACIRDAVSQVLKGYDWSLVPMPVRGNGSLKAKP) are dimerization (DIM). The HMG box DNA-binding region spans 109–177 (VKRPMNAFMV…QHKKDHPDYK (69 aa)). Basic and acidic residues-rich tracts occupy residues 163–178 (ERLRVQHKKDHPDYKY), 219–228 (DGHHHGEHAG), and 242–257 (TDLHHGSKQELKHEGR). Disordered regions lie at residues 163 to 257 (ERLR…HEGR) and 327 to 381 (AGGA…DYGS). The segment at 233-308 (PPTPPTTPKT…LNGHTAMPAD (76 aa)) is transactivation domain (TAM). Positions 338-349 (SPASASPSSADS) are enriched in low complexity. Residues 353-470 (RPHIKTEQLS…QPVYTTLTRP (118 aa)) form a transactivation domain (TAC) region. Polar residues predominate over residues 359-372 (EQLSPSHYSDQSHG). A 9aaTAD motif is present at residues 424 to 432 (SSIYQYPYF).

As to expression, widely expressed in the embryo.

It is found in the nucleus. Functionally, transcription factor that may play a role in central nervous system, limb and facial development. May be involved in male sex determination. Binds the consensus motif 5'-[AT][AT]CAA[AT]G-3'. This chain is Transcription factor SOX-8 (SOX8), found in Gallus gallus (Chicken).